Here is a 345-residue protein sequence, read N- to C-terminus: MLLIDIKDKELSQEEVEILEHPLVSGLILFSRNFHDKVQLEALVKSIRQRVKKPLLITVDQEGGRVQRFREGFTKLPAMQAFHTLAKNPQESTALARQTGWLMAAEMFALDIDLSFAPVLDLGHQCKAIGDRSFGENPDAMLPIAEAFIDGMREMGMATTGKHFPGHGHVLADSHLETPFDDRPKEAIFNRDILPFKQLISKGKLSAVMPAHVIYTQCDSQPASGSEYWLKQVLRNQLNFNGVIFSDDLGMKGAGFMGNFVERSEKAIHAGCDLLLLCNEPEGVIQVLDGLKYQPTKTQTERHISLMKRKTVRWNELEASPRYQQAQQRLTALQNEWLEYKAQHC.

Residues Asp-60, Arg-68, Arg-132, and 162-163 contribute to the substrate site; that span reads KH. His-175 acts as the Proton donor/acceptor in catalysis. Catalysis depends on Asp-247, which acts as the Nucleophile.

Belongs to the glycosyl hydrolase 3 family. NagZ subfamily.

The protein localises to the cytoplasm. The catalysed reaction is Hydrolysis of terminal non-reducing N-acetyl-D-hexosamine residues in N-acetyl-beta-D-hexosaminides.. Its pathway is cell wall biogenesis; peptidoglycan recycling. In terms of biological role, plays a role in peptidoglycan recycling by cleaving the terminal beta-1,4-linked N-acetylglucosamine (GlcNAc) from peptide-linked peptidoglycan fragments, giving rise to free GlcNAc, anhydro-N-acetylmuramic acid and anhydro-N-acetylmuramic acid-linked peptides. This chain is Beta-hexosaminidase, found in Actinobacillus pleuropneumoniae serotype 3 (strain JL03).